The following is a 665-amino-acid chain: RNA polymerase II-associated protein 3 (665 aa).

N-acetylthreonine is present on threonine 2. The stretch at 8-41 (IELQLQVKQNAEELQDFMRDLENWEKDIKQKDME) is one TPR 1 repeat. Positions 37–82 (QKDMELRRQNGVPEENLPPIRNGNFRKKKKGKAKESSKKTREENTK) are disordered. Basic and acidic residues predominate over residues 69–82 (AKESSKKTREENTK). Phosphoserine occurs at positions 87, 116, 119, and 121. Positions 109–129 (DSTHESLSQESESEEDGIHVD) are disordered. TPR repeat units lie at residues 133–166 (ALVL…DPYN), 168–200 (VLPT…NRSY), 201–234 (TKAY…EPNN), 282–315 (AISE…DGAN), 317–349 (LLPA…DGSY), and 350–383 (SKAF…EPGN). Serine 481 carries the phosphoserine modification. A Glycyl lysine isopeptide (Lys-Gly) (interchain with G-Cter in SUMO2) cross-link involves residue lysine 498.

Belongs to the RPAP3 family. As to quaternary structure, tightly associated with the RNA polymerase II complex. Component of the R2TP complex composed at least of RUVBL1, RUVBL2, RPAP3 and PIHD1. Component of the PAQosome complex which is responsible for the biogenesis of several protein complexes and which consists of R2TP complex members RUVBL1, RUVBL2, RPAP3 and PIH1D1, URI complex members PFDN2, PFDN6, PDRG1, UXT and URI1 as well as ASDURF, POLR2E and DNAAF10/WDR92. Interacts with PIH1D1. Interacts with TSC1 and TSC2. Interacts with PRPF8 and EFTUD2 in a ZNHIT2-dependent manner.

Forms an interface between the RNA polymerase II enzyme and chaperone/scaffolding protein, suggesting that it is required to connect RNA polymerase II to regulators of protein complex formation. This is RNA polymerase II-associated protein 3 (RPAP3) from Homo sapiens (Human).